Consider the following 316-residue polypeptide: ATP synthase gamma chain (316 aa).

Belongs to the ATPase gamma chain family. In terms of assembly, F-type ATPases have 2 components, CF(1) - the catalytic core - and CF(0) - the membrane proton channel. CF(1) has five subunits: alpha(3), beta(3), gamma(1), delta(1), epsilon(1). CF(0) has three main subunits: a, b and c.

The protein resides in the cellular thylakoid membrane. Produces ATP from ADP in the presence of a proton gradient across the membrane. The gamma chain is believed to be important in regulating ATPase activity and the flow of protons through the CF(0) complex. The polypeptide is ATP synthase gamma chain (Parasynechococcus marenigrum (strain WH8102)).